Consider the following 193-residue polypeptide: Cysteine and glycine-rich protein 2 (193 aa).

The LIM zinc-binding 1 domain occupies 10–61 (CGACGRTVYHAEEVQCDGRSFHRCCFLCMVCRKNLDSTTVAIHDEEIYCKSC). Positions 64-69 (KKYGPK) match the Nuclear localization signal motif. K91 participates in a covalent cross-link: Glycyl lysine isopeptide (Lys-Gly) (interchain with G-Cter in SUMO2). An N6-acetyllysine mark is found at K112 and K131. The LIM zinc-binding 2 domain occupies 119 to 170 (CSRCGDSVYAAEKIIGAGKPWHKNCFRCAKCGKSLESTTLTEKEGEIYCKGC). K137 is modified (N6-acetyllysine; alternate). K137 is subject to N6-succinyllysine; alternate. K161 is subject to N6-acetyllysine.

In terms of assembly, interacts with KAT14. The LIM domain 1 is necessary and sufficient for this interaction. Interacts with GLRX3.

The protein localises to the nucleus. Drastically down-regulated in response to PDGF-BB or cell injury, that promote smooth muscle cell proliferation and dedifferentiation. Seems to play a role in the development of the embryonic vascular system. The chain is Cysteine and glycine-rich protein 2 (Csrp2) from Mus musculus (Mouse).